The sequence spans 73 residues: Translation initiation factor IF-1 (73 aa).

The 73-residue stretch at 1 to 73 (MAKKDGVIEL…ARGRIVYRYK (73 aa)) folds into the S1-like domain.

It belongs to the IF-1 family. Component of the 30S ribosomal translation pre-initiation complex which assembles on the 30S ribosome in the order IF-2 and IF-3, IF-1 and N-formylmethionyl-tRNA(fMet); mRNA recruitment can occur at any time during PIC assembly.

Its subcellular location is the cytoplasm. In terms of biological role, one of the essential components for the initiation of protein synthesis. Stabilizes the binding of IF-2 and IF-3 on the 30S subunit to which N-formylmethionyl-tRNA(fMet) subsequently binds. Helps modulate mRNA selection, yielding the 30S pre-initiation complex (PIC). Upon addition of the 50S ribosomal subunit IF-1, IF-2 and IF-3 are released leaving the mature 70S translation initiation complex. This is Translation initiation factor IF-1 from Tropheryma whipplei (strain TW08/27) (Whipple's bacillus).